The chain runs to 158 residues: MLNIANTIRSTLLRSKTRNVRTLAATVNPAEQQQVQAVLPDKLYSSIEIEYRGHDKAVLKSYTTFLQQVCKHLEIPQGRLEVLPYIRWVQPALRSKFVHKKYKLHYETRTHITKLEILNVTGSTASTFLEYIERNIPEGVGMRVGFTELQPLPLTIQN.

It belongs to the universal ribosomal protein uS10 family.

It is found in the mitochondrion. The chain is Small ribosomal subunit protein uS10m (mrps-10) from Caenorhabditis briggsae.